A 1252-amino-acid chain; its full sequence is MARADTGRGLLVLTFCLLSARGELPLPQETTVKLSCDEGPLQVILGPEQAVVLDCTLGATAAGPPTRVTWSKDGDTVLEHENLHLLPNGSLWLSSPLEQEDSDDEEALRIWKVTEGSYSCLAHSPLGVVASQVAVVKLATLEDFSLHPESQIVEENGTARFECHTKGLPAPIITWEKDQVTVPEESRLITLPNGVLQILDVQDSDAGSYRCVATNSARQRFSQEASLTVALRGSLEATRGQDVVIVAAPENTTVVSGQSVVMECVASADPTPFVSWVRQDGKPISTDVIVLGRTNLLIASAQPRHSGVYVCRANKPRTRDFATAAAELRVLAAPAISQAPEALSRTRASTARFVCRASGEPRPALHWLHDGIPLRPNGRVKVQGGGGSLVITQIGLQDAGYYQCVAENSAGTACAAAPLAVVVREGLPSAPTRVTATPLSSSSVLVAWERPELHSEQIIGFSLHYQKARGVDNVEYQFAVNNDTTELQVRDLEPNTDYEFYVVAYSQLGASRTSSPALVHTLDDVPSAAPQLTLSSPNPSDIRVAWLPLPSSLSNGQVLKYKIEYGLGKEDQVFSTEVPGNETQLTLNSLQPNKVYRVRISAGTGAGYGVPSQWMQHRTPGVHNQSHVPFAPAELKVRAKMESLVVSWQPPPHPTQISGYKLYWREVGTEEEADGDRPPGGRGDQAWDVGPVRLKKKVKQYELTQLVPGRLYEVKLVAFNKHEDGYAAVWKGKTEKAPTPDLPIQRGPPLPPAHVHAESNSSTSIWLRWKKPDFTTVKIVNYTVRFGPWGLRNASLVTYYTSSGEDILIGGLKPFTKYEFAVQSHGVDMDGPFGSVVERSTLPDRPSTPPSDLRLSPLTPSTVRLHWCPPTEPNGEIVEYLILYSNNHTQPEHQWTLLTTEGNIFSAEVHGLESDTRYFFKMGARTEVGPGPFSRLQDVITLQKTFSDSLDVHAVTGIIVGVCLGLLCLLACMCAGLRRSSHREALPGLSSSGTPGNPALYTRARLGPPSVPAAHELESLVHPRPQDWSPPPSDVEDKAEVHSLMGGSVSDCRGHSKRKISWAQAGGPNWAGSWAGCELPQGSGPRPALTRALLPPAGTGQTLLLQALVYDAIKSNGRKKPSPACRNQVEAEVIVHSDFGASKGCPDLHLQDLEPEEPLTAETLPSTSGAVDLSQGADWLGRELGGCQPTTSGPERLTCLPEAASASCSCSDLQPSTAIEEAPGKSCQPKALCPLTVSPSLPRAPVSSAQVP.

Positions 1 to 22 (MARADTGRGLLVLTFCLLSARG) are cleaved as a signal peptide. At 23-956 (ELPLPQETTV…SDSLDVHAVT (934 aa)) the chain is on the extracellular side. Ig-like domains are found at residues 27-136 (PQET…VAVV), 142-228 (EDFS…ASLT), 241-329 (QDVV…AELR), and 334-420 (PAIS…APLA). 2 disulfide bridges follow: Cys55-Cys120 and Cys163-Cys211. Asn88 is a glycosylation site (N-linked (GlcNAc...) asparagine). Asn251 carries N-linked (GlcNAc...) asparagine glycosylation. 2 cysteine pairs are disulfide-bonded: Cys264/Cys311 and Cys355/Cys404. Fibronectin type-III domains are found at residues 430–524 (APTR…TLDD), 526–622 (PSAA…TPGV), 631–742 (APAE…TPDL), 751–844 (PPAH…TLPD), and 849–944 (PPSD…TLQK). The disordered stretch occupies residues 669-688 (TEEEADGDRPPGGRGDQAWD). The chain crosses the membrane as a helical span at residues 957-977 (GIIVGVCLGLLCLLACMCAGL). Over 978–1252 (RRSSHREALP…RAPVSSAQVP (275 aa)) the chain is Cytoplasmic. Thr994 is modified (phosphothreonine).

The protein belongs to the immunoglobulin superfamily. DCC family. As to expression, expressed in skeletal muscle, heart and brain. Brain expression is hippocampus-specific.

Its subcellular location is the cell membrane. This Mus musculus (Mouse) protein is Immunoglobulin superfamily DCC subclass member 4 (Igdcc4).